A 494-amino-acid chain; its full sequence is Acetyl-coenzyme A carboxylase carboxyl transferase subunit beta, chloroplastic (494 aa).

Positions 226-494 (LWVQCENCYG…VPLNQNETEH (269 aa)) constitute a CoA carboxyltransferase N-terminal domain. Residues cysteine 230, cysteine 233, cysteine 249, and cysteine 252 each contribute to the Zn(2+) site. The segment at 230–252 (CENCYGLNYKKFLKSKMNICEQC) adopts a C4-type zinc-finger fold.

It belongs to the AccD/PCCB family. In terms of assembly, acetyl-CoA carboxylase is a heterohexamer composed of biotin carboxyl carrier protein, biotin carboxylase and 2 subunits each of ACCase subunit alpha and ACCase plastid-coded subunit beta (accD). It depends on Zn(2+) as a cofactor.

It is found in the plastid. The protein localises to the chloroplast stroma. The enzyme catalyses N(6)-carboxybiotinyl-L-lysyl-[protein] + acetyl-CoA = N(6)-biotinyl-L-lysyl-[protein] + malonyl-CoA. It functions in the pathway lipid metabolism; malonyl-CoA biosynthesis; malonyl-CoA from acetyl-CoA: step 1/1. Its function is as follows. Component of the acetyl coenzyme A carboxylase (ACC) complex. Biotin carboxylase (BC) catalyzes the carboxylation of biotin on its carrier protein (BCCP) and then the CO(2) group is transferred by the transcarboxylase to acetyl-CoA to form malonyl-CoA. In Coffea arabica (Arabian coffee), this protein is Acetyl-coenzyme A carboxylase carboxyl transferase subunit beta, chloroplastic.